We begin with the raw amino-acid sequence, 64 residues long: MAVQKSRVTPSRRGQRRSHDALTAKKLSIDPTSGEVHIRHHVTADGYYRGKKVIAIKASVVEED.

The segment at 1 to 28 is disordered; sequence MAVQKSRVTPSRRGQRRSHDALTAKKLS.

This sequence belongs to the bacterial ribosomal protein bL32 family.

This chain is Large ribosomal subunit protein bL32 (rpmF), found in Xylella fastidiosa (strain 9a5c).